The sequence spans 2467 residues: MFRRARLSVKPNVRPGVGTRGSAAPNPQRGPEAPRPPEPATESAPKPAEPTDVPAVDSGGAEPQEQAPGSSDEKTGDKNNAAESSTLSSASSQRRKRVSSTSSLVQPSGSAPSQSRPLSTVDHDAPQPNPTPAKEKQPCSDRYRIYKARKLREMLKEELRKEKKQWKNKFSTNESQRPPDRSKMTMRDFIYYLPDNNPMTSSVEQEKKPEKSLAPTPTRDRQENQSTQDANDNEDVEEEVDDGPLLVPRVKVAEDGSIILDEESLTVEVLRTKGPCVVEENDPIFERGSTTTYSSFRKNYYSKPWSNKETDMFFLAISMVGTDFSMIGQLFPHRARIEIKNKFKREEKTNGWRIDKAFQEKRPFDFDFFAHLLQKVLAEEEKRKQKSTKCQSLKEKASKPRKNLKAKTVTSEEVNDDPDESVNSNISDPERSQNDAETVNEEESPSSSGQHLEQAMLEQDQNQEKKRRRNQGEANKQEATNLLERVLVHSSPPAAEIHKNTCPSEENESECNKEQIPSLTQNIDDIAGLAPSEETEMRMDPIPSTCNQQDIMPLARESSESCAVALPVWEPGNTASADMAHAESSCSEGRGADLKTAAPETEQTENVKPKSRSRLQRPKPNLARAVGKKSAVSQDRQDERNKNSPSETAAEKNHMEKETMNESETSVAKNTDGESPGAKTVSDLSEKSCVQQDSQAKVLRPTRLMRSRMQRPKPNVVKAAERKEILTSQEKFGAHVEKSEDESCVVIPPQTENESHKNLQCEDTVSEPGRKDPFENIQPDQPQVLSDCPSIHEGNKENKRKQVPVLRTRFQKPKPNTGRRRRRISSKEGIPEETPISGEIPATWEEIPSLDTSLREEVLSVPLAPLTATASTKDSESDVKDSGRNDTASNAEMSEMTDVTMEMETGLETIGRDTCPGEMGAEMIDIPMETEAGLKASLNETSCMEKVPELIDTTGEICTNLGETGRKEVFLQENGPKEVGPVSEPETGLQETGKDLAMKESTPDTTDSTEEREAYSEETERQEKISALIKDAEEAKARGEMETPLEEIGGGTSQRGKAAGAPVEQSASEEEPQGSACREEVAVESSTAEGKELNLRETGEDDVSSMVVVLGEKTDIEETNGDPKETERESSVSWERGSGEIQVGEEMVEDLGKPEKIDVAPREREPEEHSSGQPEADVILSSSDGSTGSPQDKVNISSKISVMPTLVEEKETTDKDISSHLGHVESCSQNLGRHETDQGMPLPDALERFSDTNLSKPLPQEQQPLQVKPAPFLRSRFKKPKPNLSRAALKRATIEAEHCVPGKKSEACKVEAAMLQQDSDQAALSPQHNVPSLMASRENDKSGHEEEEEAAILPCTQTEKDASPPNSSEPKEGSQLTPNQENGLLVPIGTPMMNTVTQETRQNVVQTTLPVRGRLQRPRPNVQKARQRQIVEKGEARDIAKNEGPELQKDETRTCLTVANSSHIESGVAVDMSSRVSECQVSESQGHADPVENLSVNKASVVHEQMRHENKPYVPSPALLIRRRFQKAKPNLGGARRKDEQPGVEKGRTDESTALTAEDHLLQKEDCDTQLSLQAREKADMPLEVSVRKECIHSEESGSDRNDAQPNAGPSEGSRDETAKEQPTSLGLEEQSLSKQIRSSCPQLWKESSYPKTVSSRRTPLSSASECEIEHSWKRTQRKTKPNLTKGRGSKRIRGKTAKKEPRASKSVLVTLRASQKEDEDDAEDFDSDYEEETYHLAPEELSKAPVFVPVGLRSPEPVSAQIEETMEELEITMDVADMTVVEHQLSHMDTTAQAVQAEKAVYPPSFEMDVGEQTQEEPGPSDGSTEAAITLLTMGDIVLQSEIIPGQGDVGVCVFPDVHSEDKSHAPFSPDNVNQKVVHDYPEVCSPVISTSHASFEENRIVSKEQSNRDAAVEEEAVEETLPTRNTTSTMSTHLRMESMVVTPELNSEKTLEISESHGHQEVASFCITKETEVEIQRETEGDDSKAVELEDKSHAPVTAAETKEEEQSQCVGDVEGASVSQEAILPARIEDHEETLQEVQESGTAVASSEIGQQTLDSGQSFGESAAKEALKETPKGSDVPVLHGPESVPSHIPEAQQENTGPQAVTVNPFADGQQDGEDEQAFILTLVEIPTHATEGFTDAAMQLMPSSLLPAPILVRSGNAAERGDLSGSLQTSLVVQDAPSLSPSRSGSSEKPPANLDLTSRKRFCCSPDESIHVPPAKKSSLVPGIDYQECTSEVCSEELNVFEKTAESCMGQGIFPTSESTHATSKPQKEHSEPTDTGSSGSLDEIKDACVENMAQLPQSEIVSDKEEKTEPASNSEQRDIVTSSSKPPLTRPGRRPLGFLSLLCPKNSLESDEVTQTHSKKRLKPQIPVSRRNLRKPNLHNTSQKKNQDSSAPPPSPSVTAPLSGTAGSPESSAAQVSSDQPLLKEECKNGPKGAPEEEVTPVSEFVFSDIFIEVDETL.

Disordered regions lie at residues 1 to 145 (MFRR…RYRI) and 159 to 243 (LRKE…VDDG). The segment at 1-301 (MFRRARLSVK…TYSSFRKNYY (301 aa)) is interaction with ZBTB43. Over residues 81–92 (AAESSTLSSASS) the composition is skewed to low complexity. Positions 99 to 118 (SSTSSLVQPSGSAPSQSRPL) are enriched in polar residues. Basic and acidic residues-rich tracts occupy residues 133–144 (AKEKQPCSDRYR) and 177–186 (RPPDRSKMTM). Residues 144–177 (RIYKARKLREMLKEELRKEKKQWKNKFSTNESQR) adopt a coiled-coil conformation. Over residues 231–242 (NDNEDVEEEVDD) the composition is skewed to acidic residues. The Myb-like domain occupies 297–347 (RKNYYSKPWSNKETDMFFLAISMVGTDFSMIGQLFPHRARIEIKNKFKREE). The required for phosphorylation by CSNK2A1 stretch occupies residues 357–472 (AFQEKRPFDF…QEKKRRRNQG (116 aa)). Disordered stretches follow at residues 380-513 (EEKR…ECNK), 576-720 (SADM…VKAA), 748-844 (PPQT…PATW), 866-893 (LTAT…NAEM), 971-1200 (LQEN…SSKI), 1231-1270 (LGRH…VKPA), 1318-1388 (DSDQ…LVPI), 1409-1448 (LPVR…PELQ), 1527-1561 (KAKP…EDHL), 1592-1706 (IHSE…RASK), 1902-1926 (IVSK…LPTR), 1977-2014 (IQRE…QCVG), 2058-2083 (LDSG…SDVP), 2179-2206 (LVVQ…DLTS), 2260-2290 (GIFP…SGSL), and 2304-2449 (LPQS…EEVT). Residues 458–487 (EQDQNQEKKRRRNQGEANKQEATNLLERVL) adopt a coiled-coil conformation. A compositionally biased stretch (basic and acidic residues) spans 649–660 (AAEKNHMEKETM). The segment covering 809 to 824 (RFQKPKPNTGRRRRRI) has biased composition (basic residues). Basic and acidic residues-rich tracts occupy residues 873 to 884 (KDSESDVKDSGR), 992 to 1002 (TGKDLAMKEST), 1009 to 1041 (TEER…RGEM), 1089 to 1098 (EGKELNLRET), 1112 to 1130 (EKTD…ERES), and 1150 to 1170 (DLGK…EEHS). 4 stretches are compositionally biased toward polar residues: residues 1180–1200 (LSSS…SSKI), 1251–1265 (DTNL…QQPL), 1318–1330 (DSDQ…QHNV), and 1364–1382 (PPNS…NQEN). Basic and acidic residues-rich tracts occupy residues 1429–1448 (QIVE…PELQ), 1536–1561 (RRKD…EDHL), and 1592–1603 (IHSEESGSDRND). Composition is skewed to polar residues over residues 1621 to 1642 (EQPT…SSCP) and 1650 to 1665 (YPKT…SSAS). Residues 1688–1697 (RGSKRIRGKT) are compositionally biased toward basic residues. Composition is skewed to basic and acidic residues over residues 1902 to 1913 (IVSKEQSNRDAA), 1977 to 1996 (IQRE…DKSH), and 2068 to 2078 (AAKEALKETPK). Low complexity predominate over residues 2185–2199 (PSLSPSRSGSSEKPP). Composition is skewed to polar residues over residues 2262–2273 (FPTSESTHATSK), 2319–2334 (PASN…SSSK), and 2414–2429 (TAGS…SSDQ).

Component of TFIIIB complex. The TFIIIB complex has two activities, alpha and beta. The TFIIIB-alpha and TFIIIB-beta activities are required for transcription of genes with TFIIIC-bound internal promoters and PSE transcription factor-bound external promoters, respectively. The TFIIIB-alpha activity complex is composed of TBP, BDP1, and a complex containing both BRF2 and at least four stably associated proteins; YY1 facilitates the formation of TFIIIB-alpha activity complex. The TFIIIB-beta activity complex is composed of TBP, BDP1, and BRF1. Interacts with BRF1; this interaction diminishes during mitosis resulting in the release of BDP1 from chromosomal templates. Component of TFIIIC complex. The TFIIIC complex has two activities, C1 and C2. The TFIIIC2 activity complex is only required for transcription of the 'classical' pol III genes whereas the TFIIIC1 activity complex is required for transcription of all pol III genes. The TFIIIC1 activity complex is composed at least of BDP1. Interacts with ZBTB43. Post-translationally, phosphorylated by CSNK2A1 during mitosis, resulting in its release from chromatin and suppression of polymerase III transcription. Expressed in the cochlea, particularly in the spiral ligament, the capillaries of the stria vascularis and the basilar membrane.

The protein localises to the nucleus. General activator of RNA polymerase III transcription. Requires for transcription from all three types of polymerase III promoters. Requires for transcription of genes with internal promoter elements and with promoter elements upstream of the initiation site. The sequence is that of Transcription factor TFIIIB component B'' homolog (Bdp1) from Mus musculus (Mouse).